A 155-amino-acid polypeptide reads, in one-letter code: Protein-export protein SecB (155 aa).

The protein belongs to the SecB family. As to quaternary structure, homotetramer, a dimer of dimers. One homotetramer interacts with 1 SecA dimer.

It localises to the cytoplasm. Functionally, one of the proteins required for the normal export of preproteins out of the cell cytoplasm. It is a molecular chaperone that binds to a subset of precursor proteins, maintaining them in a translocation-competent state. It also specifically binds to its receptor SecA. In Cronobacter sakazakii (strain ATCC BAA-894) (Enterobacter sakazakii), this protein is Protein-export protein SecB.